The primary structure comprises 628 residues: Nuclear receptor subfamily 4 group A member 3 (628 aa).

An activation function (AF)-1 domain region spans residues 1–112; sequence MPCVQAQYSP…HHHHHHHHHH (112 aa). A required for DNA-PK heterotrimer region spans residues 1 to 140; it reads MPCVQAQYSP…PSTSMYFKQS (140 aa). An interaction with NCOA1, NCOA2, NCOA3 and KAT2B region spans residues 1–293; it reads MPCVQAQYSP…NRSSSSGEGT (293 aa). 2 disordered regions span residues 96-163 and 269-290; these read HGYH…DELP and ASSL…SSSG. Over residues 97 to 113 the composition is skewed to basic residues; the sequence is GYHHHHHHHHHHHHHHQ. Positions 142-151 are enriched in pro residues; the sequence is PSTPTTPGFP. The span at 270 to 289 shows a compositional bias: low complexity; that stretch reads SSLLGESPSLPSPPNRSSSS. A DNA-binding region (nuclear receptor) is located at residues 291 to 366; the sequence is EGTCAVCGDN…VGMVKEVVRT (76 aa). 2 NR C4-type zinc fingers span residues 294-314 and 330-354; these read CAVC…CEGC and CLAN…FQKC. The disordered stretch occupies residues 366 to 396; sequence TDSLKGRRGRLPSKPKSPLQQEPSQPSPPSP. Over residues 379-389 the composition is skewed to low complexity; sequence KPKSPLQQEPS. The segment at 381 to 628 is interaction with KAT2B; sequence KSPLQQEPSQ…DKLFLDTLPF (248 aa). The region spanning 396 to 625 is the NR LBD domain; that stretch reads PPICMMNALV…SVIDKLFLDT (230 aa).

The protein belongs to the nuclear hormone receptor family. NR4 subfamily. As to quaternary structure, interacts with SIX3 (via homeobox); differentially regulates the transcriptional activities of NR4A3. Interacts with NR3C1 (via nuclear receptor DNA-binding domain); the interactions represses transcription activity of NR4A3 on the POMC promoter Nur response element (NurRE). Interacts with TRIM28; the interactions potentiates NR4A3 activity on NurRE promoter. Binds DNA as a monomer and homodimer. Interacts with PARP1; activates PARP1 by improving acetylation of PARP1 and suppressing the interaction between PARP1 and SIRT1. Interacts with the constituents of DNA-PK heterotrimer PRKDC, XRCC6 and XRCC5; phosphorylates and prevents NR4A3 ubiquitinylation and degradation. Interacts with NCOA2; potentiates the activity of the NR4A3. Interacts with NCOA1, NCOA3, MED1 and KAT2B. Interacts with EP300 and NCOA2; mediates the recruitment of MED1 in the coactivator complex. Phosphorylated by PRKDC. As to expression, expressed at high levels in cultured apoptotic neuronal cells and fetal brain, and at low level in adult brain.

It localises to the nucleus. Functionally, transcriptional activator that binds to regulatory elements in promoter regions in a cell- and response element (target)-specific manner. Induces gene expression by binding as monomers to the NR4A1 response element (NBRE) 5'-AAAAGGTCA-3' site and as homodimers to the Nur response element (NurRE) site in the promoter of their regulated target genes. Plays a role in the regulation of proliferation, survival and differentiation of many different cell types and also in metabolism and inflammation. Mediates proliferation of vascular smooth muscle, myeloid progenitor cell and type B pancreatic cells; promotes mitogen-induced vascular smooth muscle cell proliferation through transactivation of SKP2 promoter by binding a NBRE site. Upon PDGF stimulation, stimulates vascular smooth muscle cell proliferation by regulating CCND1 and CCND2 expression. In islets, induces type B pancreatic cell proliferation through up-regulation of genes that activate cell cycle, as well as genes that cause degradation of the CDKN1A. Negatively regulates myeloid progenitor cell proliferation by repressing RUNX1 in a NBRE site-independent manner. During inner ear, plays a role as a key mediator of the proliferative growth phase of semicircular canal development. Also mediates survival of neuron and smooth muscle cells; mediates CREB-induced neuronal survival, and during hippocampus development, plays a critical role in pyramidal cell survival and axonal guidance. Is required for S phase entry of the cell cycle and survival of smooth muscle cells by inducing CCND1, resulting in RB1 phosphorylation. Binds to NBRE motif in CCND1 promoter, resulting in the activation of the promoter and CCND1 transcription. Also plays a role in inflammation; Upon TNF stimulation, mediates monocyte adhesion by inducing the expression of VCAM1 and ICAM1 by binding to the NBRE consensus site. In mast cells activated by Fc-epsilon receptor cross-linking, promotes the synthesis and release of cytokines but impairs events leading to degranulation. Also plays a role in metabolism; by modulating feeding behavior; and by playing a role in energy balance by inhibiting the glucocorticoid-induced orexigenic neuropeptides AGRP expression, at least in part by forming a complex with activated NR3C1 on the AGRP-glucocorticoid response element (GRE), and thus weakening the DNA binding activity of NR3C1. Upon catecholamines stimulation, regulates gene expression that controls oxidative metabolism in skeletal muscle. Plays a role in glucose transport by regulating translocation of the SLC2A4 glucose transporter to the cell surface. Finally, during gastrulation plays a crucial role in the formation of anterior mesoderm by controlling cell migration. Also participates in cardiac hypertrophy by activating PARP1. The chain is Nuclear receptor subfamily 4 group A member 3 (Nr4a3) from Rattus norvegicus (Rat).